Here is a 301-residue protein sequence, read N- to C-terminus: MGDQVQFARMNGLGNKILVVDMRGRKDRVTPQAAIALNADPATEFDQIMAIHDPKSAGTDAWIDIVNSDGSMAQACGNGTRCVVQALAAETGRKAFLFHTVAGLLEAKEHDNGTISVDMGKPRFGWDQIPLAEEFHDTRRIELQIGPIDAPVLHSPSVASMGNPHAIFWVENDVWSYELDRFGPLLENHPIFPERANISIARIRSRQEMDLRTWERGAGLTLACGSAACAAAVNGARTGRTERMVTVNVPGGPLKIEWRERDDHVIMTGPAEWEWSGTVDPVTGIFARNEPESGDNGARAL.

Substrate is bound by residues asparagine 15, glutamine 47, and asparagine 67. Residue cysteine 76 is the Proton donor of the active site. Substrate is bound by residues 77 to 78 (GN), asparagine 163, asparagine 197, and 215 to 216 (ER). Cysteine 224 (proton acceptor) is an active-site residue. Substrate is bound at residue 225-226 (GS).

It belongs to the diaminopimelate epimerase family. Homodimer.

It localises to the cytoplasm. The enzyme catalyses (2S,6S)-2,6-diaminopimelate = meso-2,6-diaminopimelate. The protein operates within amino-acid biosynthesis; L-lysine biosynthesis via DAP pathway; DL-2,6-diaminopimelate from LL-2,6-diaminopimelate: step 1/1. Functionally, catalyzes the stereoinversion of LL-2,6-diaminopimelate (L,L-DAP) to meso-diaminopimelate (meso-DAP), a precursor of L-lysine and an essential component of the bacterial peptidoglycan. This chain is Diaminopimelate epimerase, found in Rhizobium meliloti (strain 1021) (Ensifer meliloti).